The sequence spans 147 residues: uncharacterized protein (147 aa).

To M.jannaschii MJ1086 N-terminal region.

This is an uncharacterized protein from Methanocaldococcus jannaschii (strain ATCC 43067 / DSM 2661 / JAL-1 / JCM 10045 / NBRC 100440) (Methanococcus jannaschii).